Consider the following 477-residue polypeptide: Salivary plasminogen activator alpha 2 (477 aa).

Residues 1–36 (MVNTMKTKLLCVLLLCGAVFSLPRQETYRQLARGSR) form the signal peptide. Residues 40–82 (VACRDEKTQMIYQQQESWLRPEVRSKRVEHCRCDRGLAQCHTV) enclose the Fibronectin type-I domain. 14 disulfides stabilise this stretch: cysteine 42–cysteine 72, cysteine 70–cysteine 79, cysteine 87–cysteine 98, cysteine 92–cysteine 109, cysteine 111–cysteine 120, cysteine 128–cysteine 209, cysteine 149–cysteine 191, cysteine 180–cysteine 204, cysteine 214–cysteine 345, cysteine 257–cysteine 273, cysteine 265–cysteine 334, cysteine 359–cysteine 434, cysteine 391–cysteine 407, and cysteine 424–cysteine 452. The 39-residue stretch at 83 to 121 (PVKSCSELRCFNGGTCWQAASFSDFVCQCPKGYTGKQCE) folds into the EGF-like domain. A Kringle domain is found at 128–209 (CYKDQGVTYR…ILEFCSVPVC (82 aa)). Asparagine 185 is a glycosylation site (N-linked (GlcNAc...) asparagine). Residues 226–476 (STGGLFTDIT…YLGWIRDNMR (251 aa)) enclose the Peptidase S1 domain. Residues histidine 272 and aspartate 321 each act as charge relay system in the active site. An N-linked (GlcNAc...) asparagine glycan is attached at asparagine 398. The Charge relay system role is filled by serine 428.

Belongs to the peptidase S1 family. Monomer.

The protein resides in the secreted. The enzyme catalyses Specific cleavage of Arg-|-Val bond in plasminogen to form plasmin.. Its activity is regulated as follows. Activity toward plasminogen is stimulated in the presence of fibrin I. Functionally, probably essential to support the feeding habits of this exclusively haematophagous animal. Probable potent thrombolytic agent. The chain is Salivary plasminogen activator alpha 2 from Desmodus rotundus (Vampire bat).